Consider the following 375-residue polypeptide: Trichodiene synthase (375 aa).

Belongs to the trichodiene synthase family.

The enzyme catalyses (2E,6E)-farnesyl diphosphate = trichodiene + diphosphate. The protein operates within sesquiterpene biosynthesis; trichothecene biosynthesis. Functionally, TS is a member of the terpene cyclase group of enzymes. It catalyzes the isomerization and cyclization of farnesyl pyro-phosphate to form trichodiene, the first cyclic intermediate in the biosynthetic pathway for trichothecenes. It serves to branch trichothecene biosynthesis from the isoprenoid pathway. The polypeptide is Trichodiene synthase (TRI5) (Fusarium boothii).